Here is a 190-residue protein sequence, read N- to C-terminus: Elongation factor P (190 aa).

This sequence belongs to the elongation factor P family.

It localises to the cytoplasm. It participates in protein biosynthesis; polypeptide chain elongation. Involved in peptide bond synthesis. Stimulates efficient translation and peptide-bond synthesis on native or reconstituted 70S ribosomes in vitro. Probably functions indirectly by altering the affinity of the ribosome for aminoacyl-tRNA, thus increasing their reactivity as acceptors for peptidyl transferase. The protein is Elongation factor P of Hyphomonas neptunium (strain ATCC 15444).